A 2037-amino-acid polypeptide reads, in one-letter code: Fatty acid synthase subunit beta (2037 aa).

Residues 1 to 453 (MSTHRPFQLT…VYDTFDGSDF (453 aa)) form an acetyltransferase region. The active-site For acetyltransferase activity is the Ser-261. Residues 465-798 (VKLITELPVH…GSRVMTSKES (334 aa)) are enoyl reductase. The dehydratase stretch occupies residues 1132 to 1612 (GTELNWLQAF…LPNDTLQTTM (481 aa)). In terms of domain architecture, MaoC-like spans 1506 to 1634 (NGKTIEESVI…KVETRNVETE (129 aa)). The segment at 1613-1833 (EHVGMINGRK…MTMQVAVPRD (221 aa)) is malonyl/palmitoyl transferase. Ser-1796 (for malonyltransferase activity) is an active-site residue.

Belongs to the fungal fatty acid synthetase subunit beta family. [Alpha(6)beta(6)] hexamers of two multifunctional subunits (alpha and beta).

The enzyme catalyses acetyl-CoA + n malonyl-CoA + 2n NADPH + 4n H(+) = a long-chain-acyl-CoA + n CoA + n CO2 + 2n NADP(+).. It carries out the reaction holo-[ACP] + acetyl-CoA = acetyl-[ACP] + CoA. The catalysed reaction is holo-[ACP] + malonyl-CoA = malonyl-[ACP] + CoA. It catalyses the reaction a (3R)-hydroxyacyl-[ACP] = a (2E)-enoyl-[ACP] + H2O. The enzyme catalyses a 2,3-saturated acyl-[ACP] + NAD(+) = a (2E)-enoyl-[ACP] + NADH + H(+). It carries out the reaction (9Z)-octadecenoyl-[ACP] + H2O = (9Z)-octadecenoate + holo-[ACP] + H(+). Its function is as follows. Fatty acid synthetase catalyzes the formation of long-chain fatty acids from acetyl-CoA, malonyl-CoA and NADPH. The beta subunit contains domains for: [acyl-carrier-protein] acetyltransferase and malonyltransferase, S-acyl fatty acid synthase thioesterase, enoyl-[acyl-carrier-protein] reductase, and 3-hydroxypalmitoyl-[acyl-carrier-protein] dehydratase. This Candida albicans (Yeast) protein is Fatty acid synthase subunit beta (FAS1).